The sequence spans 213 residues: Kynurenine formamidase (213 aa).

Tryptophan 18 contacts substrate. Residues histidine 48, histidine 52, and aspartate 54 each contribute to the Zn(2+) site. Residue histidine 58 is the Proton donor/acceptor of the active site. 2 residues coordinate Zn(2+): histidine 160 and glutamate 172.

The protein belongs to the Cyclase 1 superfamily. KynB family. As to quaternary structure, homodimer. Requires Zn(2+) as cofactor.

It catalyses the reaction N-formyl-L-kynurenine + H2O = L-kynurenine + formate + H(+). It participates in amino-acid degradation; L-tryptophan degradation via kynurenine pathway; L-kynurenine from L-tryptophan: step 2/2. Functionally, catalyzes the hydrolysis of N-formyl-L-kynurenine to L-kynurenine, the second step in the kynurenine pathway of tryptophan degradation. The protein is Kynurenine formamidase of Burkholderia mallei (strain NCTC 10247).